The primary structure comprises 69 residues: uncharacterized protein (69 aa).

Residues 10–64 (IRAFRKLKGYTQEGFAKALGISVSILGEIERGNRLPSAAIIQDAADVLNISADEL) form the HTH cro/C1-type domain. Positions 21–40 (QEGFAKALGISVSILGEIER) form a DNA-binding region, H-T-H motif.

This is an uncharacterized protein from Bacillus subtilis (strain 168).